Here is a 65-residue protein sequence, read N- to C-terminus: Large ribosomal subunit protein uL29 (65 aa).

It belongs to the universal ribosomal protein uL29 family.

The polypeptide is Large ribosomal subunit protein uL29 (Hyphomonas neptunium (strain ATCC 15444)).